The sequence spans 119 residues: Holo-[acyl-carrier-protein] synthase (119 aa).

Mg(2+) is bound by residues aspartate 5 and glutamate 51.

This sequence belongs to the P-Pant transferase superfamily. AcpS family. The cofactor is Mg(2+).

It localises to the cytoplasm. It carries out the reaction apo-[ACP] + CoA = holo-[ACP] + adenosine 3',5'-bisphosphate + H(+). Functionally, transfers the 4'-phosphopantetheine moiety from coenzyme A to a Ser of acyl-carrier-protein. In Helicobacter pylori (strain ATCC 700392 / 26695) (Campylobacter pylori), this protein is Holo-[acyl-carrier-protein] synthase.